A 104-amino-acid chain; its full sequence is UPF0145 protein HCH_01985 (104 aa).

The protein belongs to the UPF0145 family.

In Hahella chejuensis (strain KCTC 2396), this protein is UPF0145 protein HCH_01985.